Consider the following 189-residue polypeptide: MTLFVGLGNPGSKYEDTRHNIGFKVIDSLVDDLGARNISKNAFQGELYRIANTLFLKPTTFMNLSGKSIETVKQFFKIELEDIIVIHDDIDLPFGAVRFKRGGGHGGHNGLRSLDAHIGKEYIRVRIGVGKPEHKSQVADYVLHRFSEEEEKEIERLVKHVSNACKALLCEDLNKVKSYYSLKSIEGLE.

Y14 lines the tRNA pocket. H19 acts as the Proton acceptor in catalysis. Residues F61, N63, and N109 each contribute to the tRNA site.

It belongs to the PTH family. In terms of assembly, monomer.

The protein localises to the cytoplasm. The catalysed reaction is an N-acyl-L-alpha-aminoacyl-tRNA + H2O = an N-acyl-L-amino acid + a tRNA + H(+). Its function is as follows. Hydrolyzes ribosome-free peptidyl-tRNAs (with 1 or more amino acids incorporated), which drop off the ribosome during protein synthesis, or as a result of ribosome stalling. Catalyzes the release of premature peptidyl moieties from peptidyl-tRNA molecules trapped in stalled 50S ribosomal subunits, and thus maintains levels of free tRNAs and 50S ribosomes. This Sulfurovum sp. (strain NBC37-1) protein is Peptidyl-tRNA hydrolase.